The primary structure comprises 176 residues: Cytochrome b (176 aa).

The next 3 helical transmembrane spans lie at 33–53 (FGSL…FLAM), 77–98 (WLIR…FLHV), and 113–133 (WNIG…GYVL). His-83 and His-97 together coordinate heme b.

Belongs to the cytochrome b family. As to quaternary structure, the cytochrome bc1 complex contains 11 subunits: 3 respiratory subunits (MT-CYB, CYC1 and UQCRFS1), 2 core proteins (UQCRC1 and UQCRC2) and 6 low-molecular weight proteins (UQCRH/QCR6, UQCRB/QCR7, UQCRQ/QCR8, UQCR10/QCR9, UQCR11/QCR10 and a cleavage product of UQCRFS1). This cytochrome bc1 complex then forms a dimer. Requires heme b as cofactor.

The protein localises to the mitochondrion inner membrane. Functionally, component of the ubiquinol-cytochrome c reductase complex (complex III or cytochrome b-c1 complex) that is part of the mitochondrial respiratory chain. The b-c1 complex mediates electron transfer from ubiquinol to cytochrome c. Contributes to the generation of a proton gradient across the mitochondrial membrane that is then used for ATP synthesis. This Sciurus carolinensis (Eastern gray squirrel) protein is Cytochrome b (MT-CYB).